The primary structure comprises 389 residues: MYKTKGGFQLTLQTLSLVVGFMAWSIIAPLMPFIKQDVNVTEGQISIILAIPVILGSVLRVPFGYLTNIVGAKWVFFTSFIVLLFPIFFLSQAQTPGMLMASGFFLGVGGAIFSVGVTSVPKYFPKEKVGLANGIYGMGNIGTAVSSFLAPPIAGIIGWQTTVRSYLIIIALFALIMFIFGDTQERKIKVPLMAQMKTLSKNYKLYYLSYWYFITFGAFVAFGIFLPNYLVNHFGIDKVDAGIRSGVFIALATFLRPIGGILGDKFNAVKVLMIDFVIMIIGAVILGISDHIALFTVGCLTISICAGIGNGLIFKLVPSYFSNEAGSANGIVSMMGGLGGFFPPLVITYVANLTGSSHLAFIFLAVFGCIALFTMRHLYQKEYGSLKHS.

12 helical membrane passes run 14-34 (TLSLVVGFMAWSIIAPLMPFI), 45-65 (ISIILAIPVILGSVLRVPFGY), 69-89 (IVGAKWVFFTSFIVLLFPIFF), 97-117 (GMLMASGFFLGVGGAIFSVGV), 139-159 (GNIGTAVSSFLAPPIAGIIGW), 161-181 (TTVRSYLIIIALFALIMFIFG), 211-231 (WYFITFGAFVAFGIFLPNYLV), 246-266 (GVFIALATFLRPIGGILGDKF), 268-288 (AVKVLMIDFVIMIIGAVILGI), 294-314 (LFTVGCLTISICAGIGNGLIF), 331-351 (IVSMMGGLGGFFPPLVITYVA), and 353-373 (LTGSSHLAFIFLAVFGCIALF).

This sequence belongs to the major facilitator superfamily. Nitrate/nitrite porter (TC 2.A.1.8) family.

It localises to the cell membrane. Probably required for nitrate uptake under anoxic conditions. Also possibly involved in excretion of nitrite produced by the dissimilatory reduction of nitrate. This is Probable nitrate transporter NarT (narT) from Staphylococcus aureus (strain JH9).